The following is a 163-amino-acid chain: Putative 4-hydroxy-4-methyl-2-oxoglutarate aldolase (163 aa).

Substrate-binding positions include 75–78 (GDQL) and Arg-97. Residue Asp-98 participates in a divalent metal cation binding.

This sequence belongs to the class II aldolase/RraA-like family. Homotrimer. Requires a divalent metal cation as cofactor.

The enzyme catalyses 4-hydroxy-4-methyl-2-oxoglutarate = 2 pyruvate. It carries out the reaction oxaloacetate + H(+) = pyruvate + CO2. Functionally, catalyzes the aldol cleavage of 4-hydroxy-4-methyl-2-oxoglutarate (HMG) into 2 molecules of pyruvate. Also contains a secondary oxaloacetate (OAA) decarboxylase activity due to the common pyruvate enolate transition state formed following C-C bond cleavage in the retro-aldol and decarboxylation reactions. The protein is Putative 4-hydroxy-4-methyl-2-oxoglutarate aldolase of Photobacterium profundum (strain SS9).